We begin with the raw amino-acid sequence, 208 residues long: Ribosomal RNA large subunit methyltransferase E (208 aa).

Glycine 61, tryptophan 63, aspartate 81, aspartate 97, and aspartate 122 together coordinate S-adenosyl-L-methionine. Lysine 162 acts as the Proton acceptor in catalysis.

This sequence belongs to the class I-like SAM-binding methyltransferase superfamily. RNA methyltransferase RlmE family.

It is found in the cytoplasm. It catalyses the reaction uridine(2552) in 23S rRNA + S-adenosyl-L-methionine = 2'-O-methyluridine(2552) in 23S rRNA + S-adenosyl-L-homocysteine + H(+). Specifically methylates the uridine in position 2552 of 23S rRNA at the 2'-O position of the ribose in the fully assembled 50S ribosomal subunit. The polypeptide is Ribosomal RNA large subunit methyltransferase E (Pseudomonas entomophila (strain L48)).